Here is a 550-residue protein sequence, read N- to C-terminus: Chaperonin GroEL (550 aa).

ATP is bound by residues 30–33 (TLGP), Lys-51, 87–91 (DGTTT), Gly-415, 479–481 (NAA), and Asp-495. The interval 526–550 (KDEKSDLGNSSAPSAGGMGGMGGMM) is disordered. Residues 541–550 (GGMGGMGGMM) show a composition bias toward gly residues.

Belongs to the chaperonin (HSP60) family. Forms a cylinder of 14 subunits composed of two heptameric rings stacked back-to-back. Interacts with the co-chaperonin GroES.

Its subcellular location is the cytoplasm. The catalysed reaction is ATP + H2O + a folded polypeptide = ADP + phosphate + an unfolded polypeptide.. In terms of biological role, together with its co-chaperonin GroES, plays an essential role in assisting protein folding. The GroEL-GroES system forms a nano-cage that allows encapsulation of the non-native substrate proteins and provides a physical environment optimized to promote and accelerate protein folding. The sequence is that of Chaperonin GroEL from Buchnera aphidicola subsp. Baizongia pistaciae (strain Bp).